The sequence spans 247 residues: Triosephosphate isomerase (247 aa).

9-11 contributes to the substrate binding site; the sequence is NWK. His93 (electrophile) is an active-site residue. The active-site Proton acceptor is Glu163. Substrate contacts are provided by residues Gly169, Ser209, and 230 to 231; that span reads GG.

It belongs to the triosephosphate isomerase family. As to quaternary structure, homodimer.

The protein resides in the cytoplasm. The catalysed reaction is D-glyceraldehyde 3-phosphate = dihydroxyacetone phosphate. Its pathway is carbohydrate biosynthesis; gluconeogenesis. It participates in carbohydrate degradation; glycolysis; D-glyceraldehyde 3-phosphate from glycerone phosphate: step 1/1. Its function is as follows. Involved in the gluconeogenesis. Catalyzes stereospecifically the conversion of dihydroxyacetone phosphate (DHAP) to D-glyceraldehyde-3-phosphate (G3P). This chain is Triosephosphate isomerase, found in Dinoroseobacter shibae (strain DSM 16493 / NCIMB 14021 / DFL 12).